The sequence spans 586 residues: Alanine racemase ungC (586 aa).

Residues 187 to 206 (RVGALPAAASTASPMGSSLP) are disordered. Over residues 196–206 (STASPMGSSLP) the composition is skewed to polar residues.

This sequence belongs to the trans-sulfuration enzymes family. Requires pyridoxal 5'-phosphate as cofactor.

It carries out the reaction L-alanine = D-alanine. Its pathway is secondary metabolite biosynthesis. Alanine racemase; part of the gene cluster that mediates the biosynthesis of the unguisins, gamma-aminobutyric acid (GABA)-containing fungal cyclic heptapeptides with the amino acid sequence cyclo-(D-Ala1-D-Val2-L-Phe3-D-Val4-D-Ala5-D-Trp6-GABA7) for unguisin A and cyclo-(D-Ala1-D-Val2-L-Leu3-D-Val4-D-Ala5-D-Trp6-GABA7) for unguisin B. Within the pathway, the alanine racemase ungC catalyzes the interconversion of L-alanine and D-alanine, providing the D-alanine which is accepted by the first adenylation domain of the nonribosomal peptide synthetase (NRPS) ungA. UngA is the main enzyme within the cluster which condenses the 7 residues using its respective 7 modules. The terminal condensation domain (Ct) is involved in cyclization with D-alanine and thereby releasing of unguisins A and B. Finally, the hydrolase ungD catalyzes the hydrolysis between the D-tryptophan and GABA residues of unguisins A and B to produce the corresponding linear peptides. The chain is Alanine racemase ungC from Aspergillus violaceofuscus (strain CBS 115571).